The chain runs to 445 residues: Phosphoglucosamine mutase (445 aa).

S102 acts as the Phosphoserine intermediate in catalysis. Positions 102, 241, 243, and 245 each coordinate Mg(2+). Position 102 is a phosphoserine (S102).

The protein belongs to the phosphohexose mutase family. It depends on Mg(2+) as a cofactor. Post-translationally, activated by phosphorylation.

It catalyses the reaction alpha-D-glucosamine 1-phosphate = D-glucosamine 6-phosphate. Functionally, catalyzes the conversion of glucosamine-6-phosphate to glucosamine-1-phosphate. In Shigella dysenteriae serotype 1 (strain Sd197), this protein is Phosphoglucosamine mutase.